The following is a 109-amino-acid chain: Transcription initiation factor IIA subunit 2 (109 aa).

Belongs to the TFIIA subunit 2 family. In terms of assembly, TFIIA is a heterodimer of the large unprocessed subunit 1 and a small subunit gamma. It was originally believed to be a heterotrimer of an alpha (p35), a beta (p19) and a gamma subunit (p12). Interacts with NCOA6 general coactivator. TFIIA forms a complex with TBP. Interacts with HSF1 (via transactivation domain). Part of TBP-based Pol II pre-initiation complex (PIC), in which Pol II core assembles with general transcription factors and other specific initiation factors including GTF2E1, GTF2E2, GTF2F1, GTF2F2, TCEA1, ERCC2, ERCC3, GTF2H2, GTF2H3, GTF2H4, GTF2H5, GTF2A1, GTF2A2, GTF2B and TBP; this large multi-subunit PIC complex mediates DNA unwinding and targets Pol II core to the transcription start site where the first phosphodiester bond forms.

It localises to the nucleus. TFIIA is a component of the transcription machinery of RNA polymerase II and plays an important role in transcriptional activation. TFIIA in a complex with TBP mediates transcriptional activity. This chain is Transcription initiation factor IIA subunit 2 (Gtf2a2), found in Rattus norvegicus (Rat).